The following is a 277-amino-acid chain: Collectin-10 (277 aa).

The N-terminal stretch at 1–27 (MSRKKEQQLRKYGTLVVLFIFQVQIFG) is a signal peptide. The segment at 41–82 (THTILPGPKGDDGEKGDRGEVGKQGKVGPKGPKGNKGTVGDV) is disordered. Residues 49-63 (KGDDGEKGDRGEVGK) show a composition bias toward basic and acidic residues. Positions 56–115 (GDRGEVGKQGKVGPKGPKGNKGTVGDVGDQGMLGKIGPIGGKGDKGAKGISGVSGKKGKA) constitute a Collagen-like domain. Positions 64 to 79 (QGKVGPKGPKGNKGTV) are enriched in low complexity. The region spanning 155-271 (TDEKFYYIVK…CQVTIYFICE (117 aa)) is the C-type lectin domain. Cystine bridges form between Cys176–Cys270 and Cys248–Cys262. Asn258 is a glycosylation site (N-linked (GlcNAc...) asparagine).

The protein belongs to the COLEC10/COLEC11 family. In terms of tissue distribution, widely expressed. Highly expressed in lung. Weakly expressed in larynx, syrinx and cranial air sac. Expressed throughout the lower gastrointestinal tract in increasing levels starting from a faint signal in duodenum and ending with relatively high signals in proctodeum, coprodeum and urodeum. In the upper part of the gastrointestinal tract, expressed in tongue, crop, and mucosa of the crop.

It localises to the secreted. It is found in the golgi apparatus. The protein resides in the cytoplasm. Lectin that binds to various sugars: galactose &gt; mannose = fucose &gt; N-acetylglucosamine &gt; N-acetylgalactosamine. Acts as a chemoattractant, probably involved in the regulation of cell migration. This is Collectin-10 (COLEC10) from Gallus gallus (Chicken).